The chain runs to 467 residues: Regulatory protein NPR6 (467 aa).

The BTB domain occupies 27–111 (SDVTFSVEGR…LYSGQVSIVP (85 aa)). Residues 117-131 (RSNCGDRGCWHTHCT) form a C2HC NPR-type zinc finger. The Zn(2+) site is built by cysteine 120, cysteine 125, histidine 127, and cysteine 130. 4 ANK repeats span residues 247 to 276 (QKIR…LNLD), 277 to 306 (ESLA…DVNY), 311 to 340 (TGKT…DPNV), and 344 to 378 (DGIT…KLRL). The segment at 434–467 (RDIGDDNSNQREGMNLHHHHHDPSTMYHHHHHHF) is disordered. Basic residues predominate over residues 449-467 (LHHHHHDPSTMYHHHHHHF).

It belongs to the plant 'ANKYRIN-BTB/POZ' family. 'NOOT-BOP-COCH-like' (NBCL) subfamily. Homodimer or heterodimer with BOP2. Interacts with PAN.

Its subcellular location is the cytoplasm. The protein localises to the nucleus. It participates in protein modification; protein ubiquitination. Functionally, may act as a substrate-specific adapter of an E3 ubiquitin-protein ligase complex (CUL3-RBX1-BTB) which mediates the ubiquitination and subsequent proteasomal degradation of target proteins. Acts redundantly with BOP2. BOP1/2 promote leaf and floral meristem fate and determinacy in a pathway targeting AP1 and AGL24. BOP1/2 act as transcriptional co-regulators through direct interaction with TGA factors, including PAN, a direct regulator of AP1. Controls lateral organ fate through positive regulation of adaxial-abaxial polarity genes ATHB-14/PHB, YAB1/FIL and YAB3, and through positive regulation of LOB domain-containing genes LOB, LBD6/AS2 and LBD36. Promotes and maintains a developmentally determinate state in leaf cells through the negative regulation of JAG, JGL and class I KNOX genes. Is also involved in nectary development, formation of normal abscission zones (AZs) and suppression of bract formation, probably by regulating the cell wall disorganization. The sequence is that of Regulatory protein NPR6 from Arabidopsis thaliana (Mouse-ear cress).